The chain runs to 359 residues: 3-dehydroquinate synthase (359 aa).

NAD(+)-binding positions include 69-74 (SGESSK), 103-107 (GVVGD), 127-128 (TT), Lys139, Lys148, and 166-169 (TLST). Residues Glu181, His242, and His259 each contribute to the Zn(2+) site.

This sequence belongs to the sugar phosphate cyclases superfamily. Dehydroquinate synthase family. The cofactor is NAD(+). Requires Co(2+) as cofactor. It depends on Zn(2+) as a cofactor.

It localises to the cytoplasm. The enzyme catalyses 7-phospho-2-dehydro-3-deoxy-D-arabino-heptonate = 3-dehydroquinate + phosphate. The protein operates within metabolic intermediate biosynthesis; chorismate biosynthesis; chorismate from D-erythrose 4-phosphate and phosphoenolpyruvate: step 2/7. Its function is as follows. Catalyzes the conversion of 3-deoxy-D-arabino-heptulosonate 7-phosphate (DAHP) to dehydroquinate (DHQ). The protein is 3-dehydroquinate synthase of Oceanobacillus iheyensis (strain DSM 14371 / CIP 107618 / JCM 11309 / KCTC 3954 / HTE831).